A 391-amino-acid chain; its full sequence is Phosphoglycerate kinase (391 aa).

Residues 21–23 (DLN), arginine 36, 59–62 (HLGR), arginine 113, and arginine 146 each bind substrate. ATP contacts are provided by residues lysine 197, glutamate 319, and 345-348 (GGDT).

It belongs to the phosphoglycerate kinase family. Monomer.

Its subcellular location is the cytoplasm. It catalyses the reaction (2R)-3-phosphoglycerate + ATP = (2R)-3-phospho-glyceroyl phosphate + ADP. The protein operates within carbohydrate degradation; glycolysis; pyruvate from D-glyceraldehyde 3-phosphate: step 2/5. The sequence is that of Phosphoglycerate kinase from Shewanella sp. (strain MR-4).